The following is a 456-amino-acid chain: DEAD-box ATP-dependent RNA helicase 10 (456 aa).

A Q motif motif is present at residues Lys-9–Ala-37. A Helicase ATP-binding domain is found at Leu-40–Ile-223. Residue Ala-53–Thr-60 coordinates ATP. A DEAD box motif is present at residues Asp-171 to Asp-174. Positions Tyr-250–Leu-394 constitute a Helicase C-terminal domain. A disordered region spans residues Ser-407–Arg-456. The span at Asn-434–Lys-448 shows a compositional bias: basic and acidic residues.

This sequence belongs to the DEAD box helicase family. DDX47/RRP3 subfamily. Expressed in all tissues and organs examined including root, cotyledon, first and second leaves, third and fourth leaves, fifth and sixth leaves, shoot apex, flower, flower bud, cauline leaf and rosette leaves.

Its subcellular location is the nucleus. The protein localises to the nucleolus. The enzyme catalyses ATP + H2O = ADP + phosphate + H(+). Functionally, involved in leaf polarity establishment by functioning cooperatively with AS2 to repress abaxial genes ARF3, ARF4, KAN1, KAN2, YAB1 and YAB5, and the knox homeobox genes KNAT1, KNAT2, KNAT6, and STM to promote adaxial development in leaf primordia at shoot apical meristems at high temperatures. Involved in the processing of pre-rRNA intermediates at high temperatures. The sequence is that of DEAD-box ATP-dependent RNA helicase 10 (RH10) from Arabidopsis thaliana (Mouse-ear cress).